We begin with the raw amino-acid sequence, 344 residues long: tRNA N6-adenosine threonylcarbamoyltransferase (344 aa).

Residues histidine 110 and histidine 114 each contribute to the Fe cation site. Residues 133–137, aspartate 166, glycine 179, and asparagine 278 contribute to the substrate site; that span reads VVSGA. Aspartate 303 is a binding site for Fe cation.

It belongs to the KAE1 / TsaD family. The cofactor is Fe(2+).

The protein localises to the cytoplasm. It carries out the reaction L-threonylcarbamoyladenylate + adenosine(37) in tRNA = N(6)-L-threonylcarbamoyladenosine(37) in tRNA + AMP + H(+). Required for the formation of a threonylcarbamoyl group on adenosine at position 37 (t(6)A37) in tRNAs that read codons beginning with adenine. Is involved in the transfer of the threonylcarbamoyl moiety of threonylcarbamoyl-AMP (TC-AMP) to the N6 group of A37, together with TsaE and TsaB. TsaD likely plays a direct catalytic role in this reaction. The chain is tRNA N6-adenosine threonylcarbamoyltransferase from Chlamydia pneumoniae (Chlamydophila pneumoniae).